The primary structure comprises 134 residues: Protein OPG030 (134 aa).

In terms of domain architecture, BACK spans 88–133; the sequence is YKENGLRNSFLRQYINNNIEEIRNTDQFLKFDVDSVCDILNNDETI.

The protein belongs to the orthopoxvirus OPG030 family.

This chain is Protein OPG030 (OPG30), found in Variola virus (isolate Human/India/Ind3/1967) (VARV).